The following is a 1379-amino-acid chain: DNA-directed RNA polymerase subunit beta (1379 aa).

This sequence belongs to the RNA polymerase beta chain family. As to quaternary structure, the RNAP catalytic core consists of 2 alpha, 1 beta, 1 beta' and 1 omega subunit. When a sigma factor is associated with the core the holoenzyme is formed, which can initiate transcription.

It catalyses the reaction RNA(n) + a ribonucleoside 5'-triphosphate = RNA(n+1) + diphosphate. DNA-dependent RNA polymerase catalyzes the transcription of DNA into RNA using the four ribonucleoside triphosphates as substrates. The polypeptide is DNA-directed RNA polymerase subunit beta (Chelativorans sp. (strain BNC1)).